The sequence spans 389 residues: 1-deoxy-D-xylulose 5-phosphate reductoisomerase (389 aa).

Positions 11, 12, 13, 14, 39, and 122 each coordinate NADPH. A 1-deoxy-D-xylulose 5-phosphate-binding site is contributed by K123. E124 contacts NADPH. D148 provides a ligand contact to Mn(2+). S149, E150, S174, and H197 together coordinate 1-deoxy-D-xylulose 5-phosphate. Position 150 (E150) interacts with Mn(2+). G203 contributes to the NADPH binding site. Residues S210, N215, K216, and E219 each contribute to the 1-deoxy-D-xylulose 5-phosphate site. E219 contributes to the Mn(2+) binding site.

Belongs to the DXR family. Requires Mg(2+) as cofactor. Mn(2+) is required as a cofactor.

It carries out the reaction 2-C-methyl-D-erythritol 4-phosphate + NADP(+) = 1-deoxy-D-xylulose 5-phosphate + NADPH + H(+). It participates in isoprenoid biosynthesis; isopentenyl diphosphate biosynthesis via DXP pathway; isopentenyl diphosphate from 1-deoxy-D-xylulose 5-phosphate: step 1/6. In terms of biological role, catalyzes the NADPH-dependent rearrangement and reduction of 1-deoxy-D-xylulose-5-phosphate (DXP) to 2-C-methyl-D-erythritol 4-phosphate (MEP). The polypeptide is 1-deoxy-D-xylulose 5-phosphate reductoisomerase (Leptospira interrogans serogroup Icterohaemorrhagiae serovar copenhageni (strain Fiocruz L1-130)).